The primary structure comprises 416 residues: Putative L-glutamine:3-amino-2,3-dideoxy-scyllo-inosose aminotransferase (416 aa).

N6-(pyridoxal phosphate)lysine is present on Lys199.

Belongs to the DegT/DnrJ/EryC1 family. L-glutamine:2-deoxy-scyllo-inosose/scyllo-inosose aminotransferase subfamily. Pyridoxal 5'-phosphate is required as a cofactor.

The catalysed reaction is 3-amino-2,3-dideoxy-scyllo-inosose + L-glutamine = 2-deoxystreptamine + 2-oxoglutaramate. It participates in metabolic intermediate biosynthesis; 2-deoxystreptamine biosynthesis; 2-deoxystreptamine from D-glucose 6-phosphate: step 4/4. The protein operates within antibiotic biosynthesis; tobramycin biosynthesis. Catalyzes the transamination of 3-amino-2,3-dideoxy-scyllo-inosose (amino-DOI) into 2-deoxystreptamine (DOS). This chain is Putative L-glutamine:3-amino-2,3-dideoxy-scyllo-inosose aminotransferase (tobS2), found in Streptoalloteichus tenebrarius (strain ATCC 17920 / DSM 40477 / JCM 4838 / CBS 697.72 / NBRC 16177 / NCIMB 11028 / NRRL B-12390 / A12253. 1 / ISP 5477) (Streptomyces tenebrarius).